The chain runs to 206 residues: MSQFFYIHPDNPQQRLINQAVEIVRKGGVIVYPTDSGYALGCKIEDKNAMERICRIRQLPDGHNFTLMCRDLSELSTYSFVDNVAFRLMKNNTPGNYTFILKGTKEVPRRLLQEKRKTIGMRVPSNPIAQALLEALGEPMLSTSLMLPGSEFTESDPEEIKDRLEKQVDLIIHGGYLGQKPTTVIDLTDDTPVVVREGVGDVKPFL.

The region spanning 14-200 is the YrdC-like domain; sequence QRLINQAVEI…TPVVVREGVG (187 aa).

Belongs to the SUA5 family.

This is an uncharacterized protein from Escherichia coli O6:H1 (strain CFT073 / ATCC 700928 / UPEC).